Reading from the N-terminus, the 330-residue chain is DNA-directed RNA polymerase subunit alpha (330 aa).

The alpha N-terminal domain (alpha-NTD) stretch occupies residues M1 to K237. Positions F251–E330 are alpha C-terminal domain (alpha-CTD).

Belongs to the RNA polymerase alpha chain family. Homodimer. The RNAP catalytic core consists of 2 alpha, 1 beta, 1 beta' and 1 omega subunit. When a sigma factor is associated with the core the holoenzyme is formed, which can initiate transcription.

It carries out the reaction RNA(n) + a ribonucleoside 5'-triphosphate = RNA(n+1) + diphosphate. In terms of biological role, DNA-dependent RNA polymerase catalyzes the transcription of DNA into RNA using the four ribonucleoside triphosphates as substrates. The chain is DNA-directed RNA polymerase subunit alpha from Legionella pneumophila (strain Paris).